The primary structure comprises 256 residues: Triosephosphate isomerase (256 aa).

9–11 contacts substrate; sequence NWK. H97 (electrophile) is an active-site residue. Residue E169 is the Proton acceptor of the active site. Residues G175, S214, and 235–236 contribute to the substrate site; that span reads GG.

The protein belongs to the triosephosphate isomerase family. In terms of assembly, homodimer.

Its subcellular location is the cytoplasm. The catalysed reaction is D-glyceraldehyde 3-phosphate = dihydroxyacetone phosphate. It participates in carbohydrate biosynthesis; gluconeogenesis. It functions in the pathway carbohydrate degradation; glycolysis; D-glyceraldehyde 3-phosphate from glycerone phosphate: step 1/1. Involved in the gluconeogenesis. Catalyzes stereospecifically the conversion of dihydroxyacetone phosphate (DHAP) to D-glyceraldehyde-3-phosphate (G3P). This Moritella marina (Vibrio marinus) protein is Triosephosphate isomerase.